The following is a 363-amino-acid chain: S-adenosylmethionine decarboxylase proenzyme (363 aa).

Catalysis depends on residues glutamate 9 and glutamate 12. Serine 69 functions as the Schiff-base intermediate with substrate; via pyruvic acid in the catalytic mechanism. Serine 69 carries the post-translational modification Pyruvic acid (Ser); by autocatalysis. Cysteine 83 functions as the Proton donor; for catalytic activity in the catalytic mechanism. Residues serine 232 and histidine 245 each act as proton acceptor; for processing activity in the active site.

This sequence belongs to the eukaryotic AdoMetDC family. The cofactor is pyruvate. Is synthesized initially as an inactive proenzyme. Formation of the active enzyme involves a self-maturation process in which the active site pyruvoyl group is generated from an internal serine residue via an autocatalytic post-translational modification. Two non-identical subunits are generated from the proenzyme in this reaction, and the pyruvate is formed at the N-terminus of the alpha chain, which is derived from the carboxyl end of the proenzyme. The post-translation cleavage follows an unusual pathway, termed non-hydrolytic serinolysis, in which the side chain hydroxyl group of the serine supplies its oxygen atom to form the C-terminus of the beta chain, while the remainder of the serine residue undergoes an oxidative deamination to produce ammonia and the pyruvoyl group blocking the N-terminus of the alpha chain.

It catalyses the reaction S-adenosyl-L-methionine + H(+) = S-adenosyl 3-(methylsulfanyl)propylamine + CO2. Its pathway is amine and polyamine biosynthesis; S-adenosylmethioninamine biosynthesis; S-adenosylmethioninamine from S-adenosyl-L-methionine: step 1/1. This is S-adenosylmethionine decarboxylase proenzyme (SAMDC) from Spinacia oleracea (Spinach).